Consider the following 443-residue polypeptide: Omega-6 fatty acid desaturase, chloroplastic (443 aa).

A chloroplast-targeting transit peptide spans methionine 1–alanine 64. The Histidine box-1 motif lies at histidine 166–histidine 170. The Histidine box-2 motif lies at histidine 202–histidine 206. Positions histidine 362–histidine 366 match the Histidine box-3 motif.

This sequence belongs to the fatty acid desaturase type 1 family.

Its subcellular location is the plastid. It localises to the chloroplast membrane. The enzyme catalyses a (9Z)-octadecenoyl-containing glycerolipid + 2 reduced [2Fe-2S]-[ferredoxin] + O2 + 2 H(+) = a (9Z,12Z)-octadecadienoyl-containing glycerolipid + 2 oxidized [2Fe-2S]-[ferredoxin] + 2 H2O. The protein operates within lipid metabolism; polyunsaturated fatty acid biosynthesis. Its function is as follows. Chloroplast omega-6 fatty acid desaturase introduces the second double bond in the biosynthesis of 16:3 and 18:3 fatty acids, important constituents of plant membranes. It is thought to use ferredoxin as an electron donor and to act on fatty acids esterified to galactolipids, sulfolipids and phosphatidylglycerol. In Brassica napus (Rape), this protein is Omega-6 fatty acid desaturase, chloroplastic.